We begin with the raw amino-acid sequence, 368 residues long: tRNA(Met) cytidine acetate ligase (368 aa).

ATP contacts are provided by residues 7-20 (IAEF…HKYL), G96, N152, and R175.

The protein belongs to the TmcAL family.

Its subcellular location is the cytoplasm. The catalysed reaction is cytidine(34) in elongator tRNA(Met) + acetate + ATP = N(4)-acetylcytidine(34) in elongator tRNA(Met) + AMP + diphosphate. Functionally, catalyzes the formation of N(4)-acetylcytidine (ac(4)C) at the wobble position of elongator tRNA(Met), using acetate and ATP as substrates. First activates an acetate ion to form acetyladenylate (Ac-AMP) and then transfers the acetyl group to tRNA to form ac(4)C34. In Streptococcus pyogenes serotype M1, this protein is tRNA(Met) cytidine acetate ligase.